The chain runs to 340 residues: Dihydroorotate dehydrogenase (quinone) (340 aa).

FMN-binding positions include 65–69 (AGADK) and Thr89. Lys69 lines the substrate pocket. 114-118 (NRNGF) is a substrate binding site. 2 residues coordinate FMN: Asn142 and Asn175. Asn175 contacts substrate. Ser178 acts as the Nucleophile in catalysis. A substrate-binding site is contributed by Asn180. FMN-binding residues include Lys220 and Thr248. 249 to 250 (NT) contributes to the substrate binding site. FMN is bound by residues Gly271, Gly300, and 321–322 (YS).

This sequence belongs to the dihydroorotate dehydrogenase family. Type 2 subfamily. In terms of assembly, monomer. FMN is required as a cofactor.

Its subcellular location is the cell membrane. The enzyme catalyses (S)-dihydroorotate + a quinone = orotate + a quinol. It functions in the pathway pyrimidine metabolism; UMP biosynthesis via de novo pathway; orotate from (S)-dihydroorotate (quinone route): step 1/1. Catalyzes the conversion of dihydroorotate to orotate with quinone as electron acceptor. The protein is Dihydroorotate dehydrogenase (quinone) of Mannheimia succiniciproducens (strain KCTC 0769BP / MBEL55E).